We begin with the raw amino-acid sequence, 694 residues long: MIDRYKHQQLRIGSVSPQQISAWAKKILPNGETVGEVTKPYTFHYKTNKPEKDGLFCERIFGPIKSGICACGNYRVIGNQKEGPKFCEQCGVEFVDSRIRRYQMGYIRLACPVTHVWYLKRLPSYIANLLDKPLKELEGLVYCDFSFARPIAKKPTFLRLRGSFEYEIQSWKYSIPLFFTTQGFDTFRSREISTGAGAIREQLADLDLRILIDYSVVEWKELGEEGLTGNEWEDRKIGRRKDFLVRRMELAKHFIRTNIEPEWMVLCLLPVLPPELRPIIQIDGGKLMSSDINELYRRVIYRNNTLTDLLTTSRSTPGELVMCQEKLVQEAVDTLLDNGIRGQPMRDGHNKVYKSFSDVIEGKEGRFRETLLGRRVDYSGRSVIVVGPSLSLHRCGLPREIAIELFQTFVIRGLIRQHLAPNIGVAESKIREKGPIVWEILQEVMRGHPVLLNRAPTLHRLGIQAFQPILVEGRAICLHPLVCKGFNADFDGDQMAVPFSLEMQAEARLLMFSHMNLFSPAIGDPISILTQDMLIGLYVLTSGNRRGICANRYNPWNLKSYQNQRFDNNNYKSTREPFFFFLIHVMRLELMGRKESIQIVLCDSGGNQSNALLLQEKLPSKFTMNLRVPIMRFMDIIQQQEVQKKKFFVYTFEPLLVIFLFTEKSKKLYKGFFGPTHMIPNHMVSKLKNSMTPI.

Zn(2+) contacts are provided by cysteine 69, cysteine 71, cysteine 87, and cysteine 90. Aspartate 489, aspartate 491, and aspartate 493 together coordinate Mg(2+).

The protein belongs to the RNA polymerase beta' chain family. RpoC1 subfamily. In plastids the minimal PEP RNA polymerase catalytic core is composed of four subunits: alpha, beta, beta', and beta''. When a (nuclear-encoded) sigma factor is associated with the core the holoenzyme is formed, which can initiate transcription. Requires Mg(2+) as cofactor. Zn(2+) is required as a cofactor.

It is found in the plastid. It localises to the chloroplast. It catalyses the reaction RNA(n) + a ribonucleoside 5'-triphosphate = RNA(n+1) + diphosphate. Its function is as follows. DNA-dependent RNA polymerase catalyzes the transcription of DNA into RNA using the four ribonucleoside triphosphates as substrates. The chain is DNA-directed RNA polymerase subunit beta' from Gossypium barbadense (Sea Island cotton).